The chain runs to 163 residues: ADP-ribosylation factor-like protein 2-binding protein (163 aa).

It belongs to the ARL2BP family. In terms of assembly, interacts with GTP bound ARL2 and ARL3; the complex ARL2-ARL2BP as well as ARL2BP alone, binds to SLC25A4/ANT1. Interaction with ARL2 may be required for cilia basal body localization. Interacts with STAT3; interaction is enhanced with ARL2. Found in a complex with ARL2BP, ARL2 and SLC25A6. Found in a complex with ARL2, ARL2BP and SLC25A4. Interacts with STAT2, STAT3 and STAT4.

The protein localises to the cytoplasm. Its subcellular location is the mitochondrion intermembrane space. It localises to the cytoskeleton. It is found in the microtubule organizing center. The protein resides in the centrosome. The protein localises to the nucleus. Its subcellular location is the spindle. It localises to the cilium basal body. Its function is as follows. Together with ARL2, plays a role in the nuclear translocation, retention and transcriptional activity of STAT3. May play a role as an effector of ARL2. This is ADP-ribosylation factor-like protein 2-binding protein (ARL2BP) from Pongo abelii (Sumatran orangutan).